Reading from the N-terminus, the 360-residue chain is Glucan endo-1,3-beta-glucosidase B (360 aa).

The N-terminal stretch at 1–25 is a signal peptide; the sequence is MATSQIAIIVLLGLLVATNIHITEA. Q26 is modified (pyrrolidone carboxylic acid). E120 serves as the catalytic Proton donor. The active-site Nucleophile is E265. Positions 341-360 are cleaved as a propeptide — removed in mature form; it reads VSERVWDITNSTASSLTSEI. Residue N350 is glycosylated (N-linked (GlcNAc...) asparagine).

It belongs to the glycosyl hydrolase 17 family.

The protein localises to the vacuole. The enzyme catalyses Hydrolysis of (1-&gt;3)-beta-D-glucosidic linkages in (1-&gt;3)-beta-D-glucans.. Its function is as follows. Implicated in the defense of plants against pathogens. The polypeptide is Glucan endo-1,3-beta-glucosidase B (Solanum lycopersicum (Tomato)).